The following is a 231-amino-acid chain: Ion-translocating oxidoreductase complex subunit E (231 aa).

Helical transmembrane passes span 18–38 (GLVQLLGLCPLLAVTATVTNA), 39–59 (LGLGFATLLVLVGSNMLVSLV), 69–89 (IPVFVMIIAALVTSVQLLINA), 93–113 (GLYLSLGIFLPLIVTNCVIIG), 128–148 (AFDGLMMGIGFTCVLVVLGAG), and 182–202 (PFLLALLPPGAFIGMGLLIAG).

It belongs to the NqrDE/RnfAE family. The complex is composed of six subunits: RnfA, RnfB, RnfC, RnfD, RnfE and RnfG.

Its subcellular location is the cell inner membrane. Its function is as follows. Part of a membrane-bound complex that couples electron transfer with translocation of ions across the membrane. This is Ion-translocating oxidoreductase complex subunit E from Shewanella denitrificans (strain OS217 / ATCC BAA-1090 / DSM 15013).